The primary structure comprises 263 residues: E3 ubiquitin-protein ligase SINA-like 8 (263 aa).

Residues 35-71 form an RING-type; degenerate zinc finger; sequence CPICCEGLTCPIFQCENGHLACSSCCPKLRNKCPACP. Residues 75–261 form an SBD region; it reads ILESILVTCP…IKLSIVETSN (187 aa). The SIAH-type zinc-finger motif lies at 78–136; the sequence is SILVTCPNDMFGCTESFLYGKKSTHEEECIFSLCSCPSLDCEYSGRYEDLYDHYKLTHI. Residues C83, C90, H102, C106, C113, C118, H130, and H135 each contribute to the Zn(2+) site.

It belongs to the SINA (Seven in absentia) family.

The enzyme catalyses S-ubiquitinyl-[E2 ubiquitin-conjugating enzyme]-L-cysteine + [acceptor protein]-L-lysine = [E2 ubiquitin-conjugating enzyme]-L-cysteine + N(6)-ubiquitinyl-[acceptor protein]-L-lysine.. It functions in the pathway protein modification; protein ubiquitination. Its function is as follows. E3 ubiquitin-protein ligase that mediates ubiquitination and subsequent proteasomal degradation of target proteins. E3 ubiquitin ligases accept ubiquitin from an E2 ubiquitin-conjugating enzyme in the form of a thioester and then directly transfers the ubiquitin to targeted substrates. It probably triggers the ubiquitin-mediated degradation of different substrates. The protein is E3 ubiquitin-protein ligase SINA-like 8 of Arabidopsis thaliana (Mouse-ear cress).